A 390-amino-acid polypeptide reads, in one-letter code: MGFEHLRTELEEMKQAGTFRELVALESAQHNRVTVDGKELIQLSSNNYLGLAAHPRLAKRAADAALEFGAGTGSVRTIAGTLEMHQAFERELATFKHTEAALVFQSGFATNLGVLSALLGPEDVVISDALNHASIIDGIRLTKAKRRIYNHVDLADLEAALQETQDARTRLVVTDGVFSMDGNIAPLPEIVELAEKYDALVMVDDAHASGVLGKSGRGTVNHFGLDGRVALQVGTLSKAIGVLGGYVACEQHVKDYLIHKGRPFLFSTSHPPAVVEANREALRVMEEETELFDRLWENTEFFKHGLRELGFNIGTSTTPITPVIVGDEALCHQLSDRLRQHGVFAQGIAFPTVAKGKARVRTIVTAEHTREDLEQALEAFKQVGQELELI.

Substrate is bound at residue Arg20. 107–108 (GF) is a binding site for pyridoxal 5'-phosphate. His132 is a binding site for substrate. Residues Ser179, 204 to 207 (DDAH), and 235 to 238 (TLSK) contribute to the pyridoxal 5'-phosphate site. Lys238 is subject to N6-(pyridoxal phosphate)lysine. Thr352 provides a ligand contact to substrate.

The protein belongs to the class-II pyridoxal-phosphate-dependent aminotransferase family. BioF subfamily. As to quaternary structure, homodimer. Pyridoxal 5'-phosphate serves as cofactor.

It catalyses the reaction 6-carboxyhexanoyl-[ACP] + L-alanine + H(+) = (8S)-8-amino-7-oxononanoate + holo-[ACP] + CO2. The protein operates within cofactor biosynthesis; biotin biosynthesis. Its function is as follows. Catalyzes the decarboxylative condensation of pimeloyl-[acyl-carrier protein] and L-alanine to produce 8-amino-7-oxononanoate (AON), [acyl-carrier protein], and carbon dioxide. This is 8-amino-7-oxononanoate synthase from Exiguobacterium sibiricum (strain DSM 17290 / CCUG 55495 / CIP 109462 / JCM 13490 / 255-15).